Consider the following 172-residue polypeptide: CD-NTase-associated protein 7 (172 aa).

The tract at residues 141-172 is required for binding to CdnC and to confer phage immunity; the sequence is AQSPGINGYLENDKTYSAGGRSLTRTSVRNFV.

Belongs to the bacterial HORMA family. HORMA1 subfamily. In terms of assembly, forms complexes with CdnC with 1:1 and 2:2 stoichimetry, and a 1:1:6 CdnC:Cap7:Cap6 complex.

Its function is as follows. Sensor protein of a CBASS antivirus system. CBASS (cyclic oligonucleotide-based antiphage signaling system) provides immunity against bacteriophage. The CD-NTase protein synthesizes cyclic nucleotides in response to infection; these serve as specific second messenger signals. The signals activate a diverse range of effectors, leading to bacterial cell death and thus abortive phage infection. A type III-C(AAA) CBASS system. In terms of biological role, binds to a closure peptide (consensus His-Xaa-Xaa-Ile-Leu-Leu-Thr), which allows it to activate CdnC for second messenger synthesis. Functionally, protects E.coli strain JP313 against bacteriophage lambda cI- infection. When the cdnC-cap7-cap6-nucC operon is transformed into a susceptible strain it confers bacteriophage immunity. Mutations in the sensor (Cap7 also called HORMA) or effector proteins (CdnC, NucC) but not the disassembly protein (Cap6 also called Trip13) no longer confer immunity. The presence of the intact operon leads to culture collapse and cell death, which occurs before the phage has finished its replication cycle, thus protecting non-infected bacteria by aborting the phage infection and preventing its propagation. In Escherichia coli (strain MS 115-1), this protein is CD-NTase-associated protein 7.